The primary structure comprises 113 residues: MTLFIAGVTLEEVREATVSALFVKLEQEKKALYLGAGSEDSLNLCKSTLDKVQEDYPLDDMEKDYLRDLLQFWLSRLFLGDGFEGEIPDSSEDLRRTATTAFTYTAAIRHYCM.

The protein is Putative gene 57 protein (57) of Bacillus phage SP01 (Bacteriophage SP01).